A 171-amino-acid polypeptide reads, in one-letter code: MEIGQYQPNLEGDGLRIGIVQSRFNEPVCNGLADACVEELERLGVSGEDVLLVSVPGALEIPLALQKLAESGQFDALIALGAVIRGETYHFELVSNESGAGITRIGLDFNLPIANAVLTTENDEQAVARMTEKGRDAARVAVEMANLTMALDQLGDDEDEEEDEEDEEERA.

Residues Phe24, 58 to 60 (ALE), and 82 to 84 (AVI) contribute to the 5-amino-6-(D-ribitylamino)uracil site. 87 to 88 (ET) lines the (2S)-2-hydroxy-3-oxobutyl phosphate pocket. His90 functions as the Proton donor in the catalytic mechanism. 5-amino-6-(D-ribitylamino)uracil is bound at residue Asn115. Position 129 (Arg129) interacts with (2S)-2-hydroxy-3-oxobutyl phosphate. Residues 150 to 171 (ALDQLGDDEDEEEDEEDEEERA) are disordered. A compositionally biased stretch (acidic residues) spans 154-171 (LGDDEDEEEDEEDEEERA).

This sequence belongs to the DMRL synthase family.

It carries out the reaction (2S)-2-hydroxy-3-oxobutyl phosphate + 5-amino-6-(D-ribitylamino)uracil = 6,7-dimethyl-8-(1-D-ribityl)lumazine + phosphate + 2 H2O + H(+). It functions in the pathway cofactor biosynthesis; riboflavin biosynthesis; riboflavin from 2-hydroxy-3-oxobutyl phosphate and 5-amino-6-(D-ribitylamino)uracil: step 1/2. Functionally, catalyzes the formation of 6,7-dimethyl-8-ribityllumazine by condensation of 5-amino-6-(D-ribitylamino)uracil with 3,4-dihydroxy-2-butanone 4-phosphate. This is the penultimate step in the biosynthesis of riboflavin. The protein is 6,7-dimethyl-8-ribityllumazine synthase of Burkholderia ambifaria (strain ATCC BAA-244 / DSM 16087 / CCUG 44356 / LMG 19182 / AMMD) (Burkholderia cepacia (strain AMMD)).